Here is a 154-residue protein sequence, read N- to C-terminus: 3-hydroxyacyl-[acyl-carrier-protein] dehydratase FabZ (154 aa).

The active site involves histidine 55.

Belongs to the thioester dehydratase family. FabZ subfamily.

Its subcellular location is the cytoplasm. The catalysed reaction is a (3R)-hydroxyacyl-[ACP] = a (2E)-enoyl-[ACP] + H2O. Involved in unsaturated fatty acids biosynthesis. Catalyzes the dehydration of short chain beta-hydroxyacyl-ACPs and long chain saturated and unsaturated beta-hydroxyacyl-ACPs. The polypeptide is 3-hydroxyacyl-[acyl-carrier-protein] dehydratase FabZ (Nitratidesulfovibrio vulgaris (strain DSM 19637 / Miyazaki F) (Desulfovibrio vulgaris)).